The following is a 213-amino-acid chain: tRNA (guanine-N(7)-)-methyltransferase (213 aa).

The S-adenosyl-L-methionine site is built by Glu44, Glu69, Asn96, and Asp118. Asp118 is an active-site residue. Lys122 provides a ligand contact to substrate. Residues Arg124–Arg129 form an interaction with RNA region. Substrate contacts are provided by residues Asp154 and Thr191–Glu194.

Belongs to the class I-like SAM-binding methyltransferase superfamily. TrmB family.

The enzyme catalyses guanosine(46) in tRNA + S-adenosyl-L-methionine = N(7)-methylguanosine(46) in tRNA + S-adenosyl-L-homocysteine. It functions in the pathway tRNA modification; N(7)-methylguanine-tRNA biosynthesis. Catalyzes the formation of N(7)-methylguanine at position 46 (m7G46) in tRNA. This chain is tRNA (guanine-N(7)-)-methyltransferase, found in Oceanobacillus iheyensis (strain DSM 14371 / CIP 107618 / JCM 11309 / KCTC 3954 / HTE831).